Here is a 308-residue protein sequence, read N- to C-terminus: Ribosomal protein L11 methyltransferase (308 aa).

Residues Thr148, Gly169, Asp191, and Asn239 each contribute to the S-adenosyl-L-methionine site.

Belongs to the methyltransferase superfamily. PrmA family.

The protein localises to the cytoplasm. The enzyme catalyses L-lysyl-[protein] + 3 S-adenosyl-L-methionine = N(6),N(6),N(6)-trimethyl-L-lysyl-[protein] + 3 S-adenosyl-L-homocysteine + 3 H(+). In terms of biological role, methylates ribosomal protein L11. This is Ribosomal protein L11 methyltransferase from Psychrobacter arcticus (strain DSM 17307 / VKM B-2377 / 273-4).